A 709-amino-acid polypeptide reads, in one-letter code: Phosphoribosylformylglycinamidine synthase subunit PurL (709 aa).

Residue His36 is part of the active site. Positions 39 and 80 each coordinate ATP. Mg(2+) is bound at residue Glu82. Residues 83–86 (SHNH) and Arg105 contribute to the substrate site. Residue His84 is the Proton acceptor of the active site. Residue Asp106 coordinates Mg(2+). Residue Gln226 coordinates substrate. Asp252 is a Mg(2+) binding site. 294-296 (ETQ) provides a ligand contact to substrate. Positions 470 and 507 each coordinate ATP. Ser510 lines the substrate pocket.

The protein belongs to the FGAMS family. As to quaternary structure, monomer. Part of the FGAM synthase complex composed of 1 PurL, 1 PurQ and 2 PurS subunits.

Its subcellular location is the cytoplasm. The catalysed reaction is N(2)-formyl-N(1)-(5-phospho-beta-D-ribosyl)glycinamide + L-glutamine + ATP + H2O = 2-formamido-N(1)-(5-O-phospho-beta-D-ribosyl)acetamidine + L-glutamate + ADP + phosphate + H(+). It functions in the pathway purine metabolism; IMP biosynthesis via de novo pathway; 5-amino-1-(5-phospho-D-ribosyl)imidazole from N(2)-formyl-N(1)-(5-phospho-D-ribosyl)glycinamide: step 1/2. In terms of biological role, part of the phosphoribosylformylglycinamidine synthase complex involved in the purines biosynthetic pathway. Catalyzes the ATP-dependent conversion of formylglycinamide ribonucleotide (FGAR) and glutamine to yield formylglycinamidine ribonucleotide (FGAM) and glutamate. The FGAM synthase complex is composed of three subunits. PurQ produces an ammonia molecule by converting glutamine to glutamate. PurL transfers the ammonia molecule to FGAR to form FGAM in an ATP-dependent manner. PurS interacts with PurQ and PurL and is thought to assist in the transfer of the ammonia molecule from PurQ to PurL. The polypeptide is Phosphoribosylformylglycinamidine synthase subunit PurL (Saccharolobus islandicus (strain M.16.27) (Sulfolobus islandicus)).